The following is a 185-amino-acid chain: Transcription factor FapR (185 aa).

The protein belongs to the FapR family.

Its function is as follows. Transcriptional factor involved in regulation of membrane lipid biosynthesis by repressing genes involved in fatty acid and phospholipid metabolism. The sequence is that of Transcription factor FapR from Staphylococcus aureus (strain Mu3 / ATCC 700698).